The sequence spans 421 residues: MEYDLTQKTLPFLDRHLIYPLLQFLKGRGVYNDTELLQLEYDLLKDTNMTDYLVELSKELGQNDADLQAKKENVVKTLAELEEATKPVFEVLENPEVVSELKENKTQNQALLTSKYGLSVEQINLLYKFGQFQYNAGRYQAASDILYHFRALSTDPELVASATWGRFACEILTSQWDSVLEELGKLRDSVDSRSLDPQQQLHQRMWVIHWSLFPFFQNDTKGKDALCDLFFSSSYISTIQAACPWILRYLVVAVIAGGHPHTASVFQKRLKDLVRVVGQEEYEYQDPLTRFVKSLYIDYSFEDAQNQLADCEKVLKQDFFLADSADAFLESARKLMSQVYCRVHQRVDIAQLSQTLNLSQEQGEKWIANLIKDSRMDAKIDESDSTVILNHPSVSVYQQVIEKTKGLTFRSSQVLNQGVTI.

A PCI domain is found at 215 to 394 (FFQNDTKGKD…STVILNHPSV (180 aa)).

The protein belongs to the eIF-3 subunit E family. In terms of assembly, component of the eukaryotic translation initiation factor 3 (eIF-3) complex.

Its subcellular location is the cytoplasm. Functionally, component of the eukaryotic translation initiation factor 3 (eIF-3) complex, which is involved in protein synthesis of a specialized repertoire of mRNAs and, together with other initiation factors, stimulates binding of mRNA and methionyl-tRNAi to the 40S ribosome. The eIF-3 complex specifically targets and initiates translation of a subset of mRNAs involved in cell proliferation. The sequence is that of Eukaryotic translation initiation factor 3 subunit E from Yarrowia lipolytica (strain CLIB 122 / E 150) (Yeast).